We begin with the raw amino-acid sequence, 289 residues long: RNA-binding protein CP29B, chloroplastic (289 aa).

A chloroplast-targeting transit peptide spans 1-62 (MAASASSLAL…NSPASRFARN (62 aa)). 2 positions are modified to phosphoserine: S6 and S12. N-acetylvaline is present on V63. The RRM 1 domain maps to 91-169 (LKLFVGNLPF…RPLRVNAGPP (79 aa)). Positions 158–199 (DGRPLRVNAGPPPPKREDGFSRGPRSSFGSSGSGYGGGGGSG) are disordered. The segment at 170 to 203 (PPKREDGFSRGPRSSFGSSGSGYGGGGGSGAGSG) is linker (Gly-rich). A compositionally biased stretch (low complexity) spans 178-187 (SRGPRSSFGS). Over residues 188 to 199 (SGSGYGGGGGSG) the composition is skewed to gly residues. The RRM 2 domain occupies 204 to 282 (NRVYVGNLSW…RQIRVSEAEA (79 aa)).

ADP-ribosylated by the Pseudomonas syringae type III effector HopU1. ADP-ribosylation reduces the ability of the protein to bind RNA. In terms of processing, phosphorylated on tyrosine residues after treatment with abscisic acid (ABA). Phosphorylation may reduce the ability of the protein to bind RNA.

Its subcellular location is the plastid. The protein resides in the chloroplast. Functionally, could be involved in splicing and/or processing of chloroplast RNA's. This Arabidopsis thaliana (Mouse-ear cress) protein is RNA-binding protein CP29B, chloroplastic.